The following is a 508-amino-acid chain: GATA zinc finger domain-containing protein 13 (508 aa).

2 disordered regions span residues 20–51 (YSKN…INNN) and 203–296 (MSII…PEIE). The segment covering 23–51 (NNNNNNNNNNNNNINNNNNNNNNNNINNN) has biased composition (low complexity). The segment covering 203–224 (MSIIPSDNFPTPQLPLETNTDL) has biased composition (polar residues). Over residues 225–247 (NNTSDCSSTTFSSPPSSAFNSPN) the composition is skewed to low complexity. Over residues 248-266 (LQNDYTQPQNQKSQSSTIV) the composition is skewed to polar residues. Positions 269-279 (NSSKSKSKNNK) are enriched in basic residues. The GATA-type zinc finger occupies 327 to 354 (CSICKIKCSIYWRRILINEVRTSVCNAC). A coiled-coil region spans residues 356-433 (LRTMKKTKKE…NNNNNNNNNN (78 aa)). Positions 399–482 (TTTTTTTTTS…NNNNNDNYND (84 aa)) are enriched in low complexity. Residues 399 to 484 (TTTTTTTTTS…NNNDNYNDSI (86 aa)) form a disordered region.

This Dictyostelium discoideum (Social amoeba) protein is GATA zinc finger domain-containing protein 13 (gtaM).